Here is a 520-residue protein sequence, read N- to C-terminus: Beta-galactoside-specific lectin 4 (520 aa).

N107 carries an N-linked (GlcNAc...) asparagine glycan. The active site involves E159. An intrachain disulfide couples C240 to C266. A propeptide spans G241–T265 (connecting peptide). The Ricin B-type lectin 1 domain occupies S269 to G396. Residue D284 to R286 coordinates D-galactose. A glycan (N-linked (GlcNAc...) asparagine) is linked at N322. A disulfide bridge links C325 with C342. N-linked (GlcNAc...) asparagine glycosylation is found at N357 and N397. Residues A400–P520 form the Ricin B-type lectin 2 domain. Disulfide bonds link C413/C426 and C451/C467. Position 494 to 496 (D494 to A496) interacts with D-galactose.

This sequence belongs to the ribosome-inactivating protein family. Type 2 RIP subfamily. Disulfide-linked dimer of A and B chains.

It catalyses the reaction Endohydrolysis of the N-glycosidic bond at one specific adenosine on the 28S rRNA.. Its function is as follows. The A chain is responsible for inhibiting protein synthesis through the catalytic inactivation of 60S ribosomal subunits by removing adenine from position 4,324 of 28S rRNA. The B chain binds to cell receptors and probably facilitates the entry into the cell of the A chain; B chains are also responsible for cell agglutination (lectin activity). Inhibits growth of the human tumor cell line Molt4. The chain is Beta-galactoside-specific lectin 4 from Viscum album (European mistletoe).